Reading from the N-terminus, the 103-residue chain is Pyrimidine/purine nucleoside phosphorylase (103 aa).

It belongs to the nucleoside phosphorylase PpnP family.

The catalysed reaction is a purine D-ribonucleoside + phosphate = a purine nucleobase + alpha-D-ribose 1-phosphate. The enzyme catalyses adenosine + phosphate = alpha-D-ribose 1-phosphate + adenine. It catalyses the reaction cytidine + phosphate = cytosine + alpha-D-ribose 1-phosphate. It carries out the reaction guanosine + phosphate = alpha-D-ribose 1-phosphate + guanine. The catalysed reaction is inosine + phosphate = alpha-D-ribose 1-phosphate + hypoxanthine. The enzyme catalyses thymidine + phosphate = 2-deoxy-alpha-D-ribose 1-phosphate + thymine. It catalyses the reaction uridine + phosphate = alpha-D-ribose 1-phosphate + uracil. It carries out the reaction xanthosine + phosphate = alpha-D-ribose 1-phosphate + xanthine. Its function is as follows. Catalyzes the phosphorolysis of diverse nucleosides, yielding D-ribose 1-phosphate and the respective free bases. Can use uridine, adenosine, guanosine, cytidine, thymidine, inosine and xanthosine as substrates. Also catalyzes the reverse reactions. The protein is Pyrimidine/purine nucleoside phosphorylase of Methylococcus capsulatus (strain ATCC 33009 / NCIMB 11132 / Bath).